Consider the following 101-residue polypeptide: MTTIADPRDILLAPVISEKSYGLIEEGTYTFLVHPDSNKTQIKIAVEKVFGVKVTSVNTANRQGKRKRTRFGYGKRKNTKRALVTISADSKPIEIFGGPVA.

The protein belongs to the universal ribosomal protein uL23 family. In terms of assembly, part of the 50S ribosomal subunit. Contacts protein L29, and trigger factor when it is bound to the ribosome.

In terms of biological role, one of the early assembly proteins it binds 23S rRNA. One of the proteins that surrounds the polypeptide exit tunnel on the outside of the ribosome. Forms the main docking site for trigger factor binding to the ribosome. This chain is Large ribosomal subunit protein uL23, found in Nocardia farcinica (strain IFM 10152).